A 265-amino-acid chain; its full sequence is Anamorsin homolog 1 (265 aa).

The tract at residues 1-143 (MAATAAAALA…KASWSMGSSF (143 aa)) is N-terminal SAM-like domain. The interval 144 to 175 (PLKKATKGLPKIQIDDDSELIDEDSLLTEDDL) is linker. 4 residues coordinate [2Fe-2S] cluster: cysteine 186, cysteine 195, cysteine 198, and cysteine 200. The segment at 186-200 (CEVGATRKACKNCTC) is fe-S binding site A. Cysteine 226, cysteine 229, cysteine 237, and cysteine 240 together coordinate [4Fe-4S] cluster. 2 short sequence motifs (cx2C motif) span residues 226–229 (CGNC) and 237–240 (CGTC). Positions 226-240 (CGNCGLGDAFRCGTC) are fe-S binding site B.

It belongs to the anamorsin family. As to quaternary structure, monomer. Requires [2Fe-2S] cluster as cofactor. [4Fe-4S] cluster serves as cofactor.

The protein resides in the cytoplasm. It is found in the mitochondrion intermembrane space. Component of the cytosolic iron-sulfur (Fe-S) protein assembly (CIA) machinery. Required for the maturation of extramitochondrial Fe-S proteins. Part of an electron transfer chain functioning in an early step of cytosolic Fe-S biogenesis, facilitating the de novo assembly of a [4Fe-4S] cluster on the cytosolic Fe-S scaffold complex. Electrons are transferred from NADPH via a FAD- and FMN-containing diflavin oxidoreductase. Together with the diflavin oxidoreductase, also required for the assembly of the diferric tyrosyl radical cofactor of ribonucleotide reductase (RNR), probably by providing electrons for reduction during radical cofactor maturation in the catalytic small subunit. This chain is Anamorsin homolog 1, found in Oryza sativa subsp. indica (Rice).